Here is a 170-residue protein sequence, read N- to C-terminus: Odorant-binding protein 2a (170 aa).

The first 15 residues, 1 to 15 (MKTLFLGVTLGLAAA), serve as a signal peptide directing secretion. A disulfide bridge links Cys-74 with Cys-166.

This sequence belongs to the calycin superfamily. Lipocalin family. As to quaternary structure, monomer. In terms of tissue distribution, strongly expressed in the nasal structures, salivary and lachrymal glands, and lung. Expressed in the liver.

It is found in the secreted. Binds and transports small hydrophobic volatile molecules with a higher affinity for aldehydes and large fatty acids, including undecanal, palmitic acid, efficient aldehydes, benzenic aldehydes, heterocyclic aldehydes and aliphatic acids. This chain is Odorant-binding protein 2a (OBP2A), found in Homo sapiens (Human).